The sequence spans 49 residues: Large ribosomal subunit protein bL33A (49 aa).

The tract at residues 21-49 (KNKRNNPERVEMKKYCSRDNKHTLHRETK) is disordered. Basic and acidic residues predominate over residues 25–49 (NNPERVEMKKYCSRDNKHTLHRETK).

It belongs to the bacterial ribosomal protein bL33 family.

The sequence is that of Large ribosomal subunit protein bL33A from Staphylococcus epidermidis (strain ATCC 35984 / DSM 28319 / BCRC 17069 / CCUG 31568 / BM 3577 / RP62A).